We begin with the raw amino-acid sequence, 402 residues long: Elongation factor Tu (402 aa).

The tr-type G domain occupies 10–212; it reads KPHINIGTIG…AVDEYIPEPK (203 aa). The segment at 19-26 is G1; sequence GHVDHGKT. Position 19–26 (19–26) interacts with GTP; it reads GHVDHGKT. Residue Thr-26 coordinates Mg(2+). The segment at 60–64 is G2; sequence GITIA. Residues 81–84 are G3; that stretch reads DCPG. GTP contacts are provided by residues 81–85 and 136–139; these read DCPGH and NKED. Positions 136–139 are G4; the sequence is NKED. The tract at residues 177-179 is G5; that stretch reads SAF.

It belongs to the TRAFAC class translation factor GTPase superfamily. Classic translation factor GTPase family. EF-Tu/EF-1A subfamily. Monomer.

It localises to the cytoplasm. It carries out the reaction GTP + H2O = GDP + phosphate + H(+). In terms of biological role, GTP hydrolase that promotes the GTP-dependent binding of aminoacyl-tRNA to the A-site of ribosomes during protein biosynthesis. The chain is Elongation factor Tu from Sulfurovum sp. (strain NBC37-1).